The chain runs to 818 residues: RNA-directed RNA polymerase (818 aa).

In terms of domain architecture, RdRp catalytic spans 524–641; it reads PVAIGLDASR…IVERRNLKQI (118 aa).

Belongs to the tombusviridae RNA polymerase family.

It catalyses the reaction RNA(n) + a ribonucleoside 5'-triphosphate = RNA(n+1) + diphosphate. Its function is as follows. RNA-dependent RNA polymerase that plays an essential role in the virus replication. The sequence is that of RNA-directed RNA polymerase from Cucumis sativus (Cucumber).